A 148-amino-acid polypeptide reads, in one-letter code: Deoxyuridine 5'-triphosphate nucleotidohydrolase (148 aa).

Residues 68–70 (RSG), asparagine 81, 85–87 (TID), and lysine 95 each bind substrate.

Belongs to the dUTPase family. It depends on Mg(2+) as a cofactor.

The enzyme catalyses dUTP + H2O = dUMP + diphosphate + H(+). The protein operates within pyrimidine metabolism; dUMP biosynthesis; dUMP from dCTP (dUTP route): step 2/2. In terms of biological role, this enzyme is involved in nucleotide metabolism: it produces dUMP, the immediate precursor of thymidine nucleotides and it decreases the intracellular concentration of dUTP so that uracil cannot be incorporated into DNA. This Rickettsia felis (strain ATCC VR-1525 / URRWXCal2) (Rickettsia azadi) protein is Deoxyuridine 5'-triphosphate nucleotidohydrolase.